The chain runs to 185 residues: Potassium-transporting ATPase KdpC subunit (185 aa).

Residues 14–34 (ALSLLTGVAYPLALTGIAAVI) traverse the membrane as a helical segment. The disordered stretch occupies residues 105-128 (AQNGAPAPVDAVTASGSGLDPHVS).

The protein belongs to the KdpC family. In terms of assembly, the system is composed of three essential subunits: KdpA, KdpB and KdpC.

The protein resides in the cell inner membrane. Part of the high-affinity ATP-driven potassium transport (or Kdp) system, which catalyzes the hydrolysis of ATP coupled with the electrogenic transport of potassium into the cytoplasm. This subunit acts as a catalytic chaperone that increases the ATP-binding affinity of the ATP-hydrolyzing subunit KdpB by the formation of a transient KdpB/KdpC/ATP ternary complex. The polypeptide is Potassium-transporting ATPase KdpC subunit (Cereibacter sphaeroides (strain ATCC 17029 / ATH 2.4.9) (Rhodobacter sphaeroides)).